The primary structure comprises 231 residues: Heptaprenylglyceryl phosphate synthase (231 aa).

Position 12 (lysine 12) interacts with sn-glycerol 1-phosphate. Mg(2+) is bound by residues aspartate 14 and threonine 40. Sn-glycerol 1-phosphate-binding positions include 159-164 (YLEYSG), glycine 189, and 209-210 (GN).

It belongs to the GGGP/HepGP synthase family. Group I subfamily. Homodimer. Mg(2+) serves as cofactor.

The enzyme catalyses sn-glycerol 1-phosphate + all-trans-heptaprenyl diphosphate = 3-heptaprenyl-sn-glycero-1-phosphate + diphosphate. It functions in the pathway membrane lipid metabolism; glycerophospholipid metabolism. Functionally, prenyltransferase that catalyzes in vivo the transfer of the heptaprenyl moiety of heptaprenyl pyrophosphate (HepPP; 35 carbon atoms) to the C3 hydroxyl of sn-glycerol-1-phosphate (G1P), producing heptaprenylglyceryl phosphate (HepGP). This reaction is an ether-bond-formation step in the biosynthesis of archaea-type G1P-based membrane lipids found in Bacillales. The polypeptide is Heptaprenylglyceryl phosphate synthase (Staphylococcus haemolyticus (strain JCSC1435)).